The sequence spans 705 residues: Ribosomal RNA large subunit methyltransferase K/L (705 aa).

Residues 43 to 154 enclose the THUMP domain; it reads LMYQSLMWSR…KDTASIALDL (112 aa).

This sequence belongs to the methyltransferase superfamily. RlmKL family.

Its subcellular location is the cytoplasm. It catalyses the reaction guanosine(2445) in 23S rRNA + S-adenosyl-L-methionine = N(2)-methylguanosine(2445) in 23S rRNA + S-adenosyl-L-homocysteine + H(+). It carries out the reaction guanosine(2069) in 23S rRNA + S-adenosyl-L-methionine = N(2)-methylguanosine(2069) in 23S rRNA + S-adenosyl-L-homocysteine + H(+). Functionally, specifically methylates the guanine in position 2445 (m2G2445) and the guanine in position 2069 (m7G2069) of 23S rRNA. The chain is Ribosomal RNA large subunit methyltransferase K/L from Erwinia tasmaniensis (strain DSM 17950 / CFBP 7177 / CIP 109463 / NCPPB 4357 / Et1/99).